Consider the following 3263-residue polypeptide: Protein unc-80 (3263 aa).

7 disordered regions span residues 491–527, 627–666, 939–1010, 1042–1076, 1380–1475, 1633–1660, and 1680–1721; these read KSALTKTTNENRRTDHQRMPSTQKSVSGSTDDELDEG, NDTERRKSSDNCLAPHPTTNSRRSSLNTLSRRGINRSNPS, PTTS…DDGV, DEEISDNENEEGTSNEEAGLPQRRPLRQSSKQVKA, SRQS…RMRA, LRKQTETNSARASIHARQSTAVPRRESA, and MQQE…LPEK. The span at 499 to 508 shows a compositional bias: basic and acidic residues; sequence NENRRTDHQR. Positions 509-519 are enriched in polar residues; the sequence is MPSTQKSVSGS. Over residues 644-658 the composition is skewed to low complexity; the sequence is TTNSRRSSLNTLSRR. 2 stretches are compositionally biased toward polar residues: residues 956 to 967 and 981 to 1005; these read GAQSQKQSNDQA and SGGTTTGNDDSEGDSSPSTPRTVSS. Over residues 1042–1055 the composition is skewed to acidic residues; that stretch reads DEEISDNENEEGTS. Over residues 1393–1402 the composition is skewed to polar residues; that stretch reads QGSTKSTTYV. Residues 1435–1447 are compositionally biased toward basic residues; that stretch reads HKRKSFRNRKQSK. Composition is skewed to polar residues over residues 1460 to 1469 and 1633 to 1653; these read GSLTSQQSPI and LRKQTETNSARASIHARQSTA. The segment covering 1680–1710 has biased composition (basic and acidic residues); sequence MQQEKEKEKEKEKEEKDALKKQSVEQDHSST. The next 5 membrane-spanning stretches (helical) occupy residues 2088 to 2108, 2318 to 2338, 2352 to 2372, 2953 to 2973, and 2995 to 3015; these read AIGMALSICWLLSPNIHGLYF, AFMFADLHLFINVINGIMIMH, YISISIHFNTLFASQGFFLIM, AIYLGLKVLMLTFGKLLAPMW, and AFVDFLLHSNLPISLFILPMI. 2 disordered regions span residues 3078–3166 and 3178–3198; these read YTPT…RTRS and RKSRHVSSAEESSEERGSVEL. The segment covering 3124–3135 has biased composition (acidic residues); it reads IPEDPEDSEDVI. Over residues 3138–3166 the composition is skewed to polar residues; sequence NSTGQVTSRISKSPSIPLNKTHQSSRTRS.

This sequence belongs to the unc-80 family. As to expression, expressed in the nervous system. Expressed in both acetylcholine and GABA motor neurons.

The protein resides in the membrane. Its function is as follows. Probable component of the nca-1 sodium channel complex, a cation channel that regulates neuronal activity by transmitting depolarization signals to synapses. Regulates the transition from slow to rapid forms of locomotion. Required for localization of nca-1 along axons and in non-synaptic regions. Contributes to endocytosis defects in synaptojanin mutants. Involved in the control of anasthetic response to halothane. This chain is Protein unc-80 (unc-80), found in Caenorhabditis elegans.